The following is a 376-amino-acid chain: MMARFVSVSSCQFHFGFREVSPPSVTSYPRRFEVSDRRFPAIPIKCSSSEPENGEDSAPSLSSSSSSSTSEVSTSNSSTYNWYTGIGGIGMLDTAYLTYLKVTGSDAFCPIGGGTCGDVLNSDYAVVFGVPLPVIGFVMYGVVTALSAELGEGNLPFGISKSNGRFALFGITTAMASASAYFLYILSTKLSGSSCLYCLVSAFLSFSLFFLSVKDVKLQEIQQVVGLQICLAIIVVASLTASYSTAQPIPSRSGDIELPYFRTEISSSSSPYAIALAKHLNSIGAKMYGAFWCSHCLEQKEMFGREAAKELNYVECFPDGYKKGTKILKACADAAIEGFPTWIINDKVLSGEIELAELAEMTGFSLDQANETNQLQ.

A chloroplast-targeting transit peptide spans 1-45 (MMARFVSVSSCQFHFGFREVSPPSVTSYPRRFEVSDRRFPAIPIK). The tract at residues 44 to 77 (IKCSSSEPENGEDSAPSLSSSSSSSTSEVSTSNS) is disordered. The Stromal portion of the chain corresponds to 46-81 (CSSSEPENGEDSAPSLSSSSSSSTSEVSTSNSSTYN). Over residues 57–77 (SAPSLSSSSSSSTSEVSTSNS) the composition is skewed to low complexity. A helical transmembrane segment spans residues 82–102 (WYTGIGGIGMLDTAYLTYLKV). Residues 103–125 (TGSDAFCPIGGGTCGDVLNSDYA) lie on the Lumenal side of the membrane. A disulfide bridge links Cys-109 with Cys-116. A helical membrane pass occupies residues 126-146 (VVFGVPLPVIGFVMYGVVTAL). Over 147–165 (SAELGEGNLPFGISKSNGR) the chain is Stromal. Residues 166 to 186 (FALFGITTAMASASAYFLYIL) form a helical membrane-spanning segment. Topologically, residues 187–192 (STKLSG) are lumenal. A helical membrane pass occupies residues 193–213 (SSCLYCLVSAFLSFSLFFLSV). The cysteines at positions 195 and 198 are disulfide-linked. The Stromal segment spans residues 214–223 (KDVKLQEIQQ). A helical transmembrane segment spans residues 224–244 (VVGLQICLAIIVVASLTASYS). The Lumenal segment spans residues 245–376 (TAQPIPSRSG…DQANETNQLQ (132 aa)). Disulfide bonds link Cys-293–Cys-296 and Cys-316–Cys-331.

It belongs to the VKOR family. In terms of assembly, interacts with the PSII subunits PSBO1 and PSBO2. Interacts with TL17, TL20.3, HCF164, PETJ, VDE1, EDA3, FKBP13 and FKBP20-2. Expressed in cotyledons, rosette leaves, stems, cauline leaves and flowers.

Its subcellular location is the plastid. The protein localises to the chloroplast thylakoid membrane. Functionally, thiol-disulfide oxidoreductase catalyzing disulfide bond formation of chloroplast proteins and involved in redox regulation and photosynthetic electron transport. Required for the assembly of photosystem II (PSII) through the formation of disulfide bond in PSBO, a subunit of the PSII oxygen-evolving complex in the thylakoid lumen. Involved in the formation of disulfide bonds in the lumenal protein FKBP13. In vitro, reduces phylloquinone (vitamin K1) and menaquinone (vitamin K2) to their respective quinol. Cannot reduce phylloquinone epoxide to phylloquinone. Plays an important role in regulating the thylakoid lumen redox. This Arabidopsis thaliana (Mouse-ear cress) protein is Thiol-disulfide oxidoreductase LTO1.